The primary structure comprises 416 residues: Carboxypeptidase B (416 aa).

The N-terminal stretch at 1–15 (MAFLILVTLALASAH) is a signal peptide. Residues 16 to 109 (YSGEHFEGEK…LEGQFGRQVP (94 aa)) constitute a propeptide, activation peptide. One can recognise a Peptidase M14 domain in the interval 117 to 411 (KYNRWETIEA…LAIKHLARYV (295 aa)). Residues H175 and E178 each coordinate Zn(2+). Substrate contacts are provided by residues 175-178 (HARE), R233, and 250-251 (TR). Disulfide bonds link C244–C267 and C258–C272. H303 serves as a coordination point for Zn(2+). Substrate contacts are provided by residues 304–305 (SY) and Y355. E377 serves as the catalytic Proton donor/acceptor.

The protein belongs to the peptidase M14 family. Zn(2+) serves as cofactor.

The protein localises to the secreted. It is found in the zymogen granule lumen. The enzyme catalyses Preferential release of a C-terminal lysine or arginine amino acid.. The protein is Carboxypeptidase B (CPB1) of Canis lupus familiaris (Dog).